The following is a 412-amino-acid chain: G-protein coupled receptor homolog UL33 (412 aa).

The Virion surface segment spans residues 1-29 (MDTIIHNSTRNNTPPHINDTCNMTGPLFA). N-linked (GlcNAc...) asparagine; by host glycosylation is found at asparagine 7, asparagine 18, and asparagine 22. The helical transmembrane segment at 30–54 (IRTTEAVLNTFIIFVGGPLNAIVLI) threads the bilayer. Residues 55 to 70 (TQLLTNRVLGYSTPTI) are Intravirion-facing. A helical membrane pass occupies residues 71-95 (YMTNLYSTNFLTLTVLPFIVLSNQW). At 96 to 102 (LLPAGVA) the chain is on the virion surface side. Residues 103-129 (SCKFLSVIYYSSCTVGFATVALIAADR) form a helical membrane-spanning segment. Cysteine 104 and cysteine 188 are disulfide-bonded. The Intravirion portion of the chain corresponds to 130–138 (YRVLHKRTY). Residues 139–160 (ARQSYRSTYMILLLTWLAGLIF) traverse the membrane as a helical segment. The Virion surface segment spans residues 161–203 (SVPAAVYTTVVMHHDANDTNNTNGHATCVLYFVAEEVHTVLLS). Residues asparagine 177 and asparagine 180 are each glycosylated (N-linked (GlcNAc...) asparagine; by host). The helical transmembrane segment at 204 to 224 (WKVLLTMVWGAAPVIMMTWFY) threads the bilayer. Over 225-240 (AFFYSTVQRTSQKQRS) the chain is Intravirion. The chain crosses the membrane as a helical span at residues 241-267 (RTLTFVSVLLISFVALQTPYVSLMIFN). Residues 268-281 (SYATTAWPMQCEHL) lie on the Virion surface side of the membrane. Residues 282–305 (TLRRTIGTLARVVPHLHCLINPIL) traverse the membrane as a helical segment. Residues 306–412 (YALLGHDFLQ…SQSHHNLSGV (107 aa)) are Intravirion-facing. The disordered stretch occupies residues 377–412 (NFPSGTWKGGQKTASNDTSTKIPHRLSQSHHNLSGV). Residues 388–397 (KTASNDTSTK) are compositionally biased toward polar residues.

This sequence belongs to the G-protein coupled receptor 1 family. In terms of assembly, heterodimerizes with US28.

Its subcellular location is the virion. It is found in the host cell membrane. The protein resides in the host cytoplasm. In terms of biological role, G-protein-coupled receptor (vGPCR) that constitutively activates multiple oncogenic signaling pathways including STAT3, AP-1, phospholipase C, NF-kappa-B or cAMP-responsive element (CRE) pathways. Plays an important role in viral reactivation from latency through activation of host CREB1, facilitating its recruitment to the viral major immediate early (MIE) genes. In turn, expression of the MIE-driven genes such as UL123 are de-repressed. Also facilitates virus dissemination via the extracellular and cell-to-cell route. The polypeptide is G-protein coupled receptor homolog UL33 (UL33) (Human cytomegalovirus (strain AD169) (HHV-5)).